The chain runs to 168 residues: uncharacterized protein (168 aa).

This is an uncharacterized protein from Mycoplasma pneumoniae (strain ATCC 29342 / M129 / Subtype 1) (Mycoplasmoides pneumoniae).